Consider the following 272-residue polypeptide: Interleukin-2 receptor subunit alpha (272 aa).

An N-terminal signal peptide occupies residues 1–21 (MDPYLLMWGLLTFITVPGCQA). Positions 22 to 84 (ELCDDDPPKI…SWDNQCQCTS (63 aa)) constitute a Sushi 1 domain. At 22-240 (ELCDDDPPKI…ETFIFTTEYQ (219 aa)) the chain is on the extracellular side. Intrachain disulfides connect Cys24–Cys67, Cys49–Cys80, and Cys51–Cys82. N-linked (GlcNAc...) asparagine glycosylation is found at Asn70 and Asn89. Residues 87–98 (ARNTTKQVTPQP) show a composition bias toward polar residues. Residues 87-109 (ARNTTKQVTPQPEEQKERKTTEM) are disordered. One can recognise a Sushi 2 domain in the interval 123 to 186 (GHCREPPPWE…WTQPQLICTG (64 aa)). 2 disulfides stabilise this stretch: Cys125–Cys168 and Cys152–Cys184. Positions 186-213 (GETEPSQFPGEEEPQASPDGLPESETSR) are disordered. The helical transmembrane segment at 241–259 (VAVAGCVFLLISVLLLSGL) threads the bilayer. Residues 260–272 (TWQRRQRKNRRTI) lie on the Cytoplasmic side of the membrane.

In terms of assembly, non-covalent dimer of an alpha and a beta subunit. IL2R exists in 3 different forms: a high affinity dimer, an intermediate affinity monomer (beta subunit), and a low affinity monomer (alpha subunit). The high and intermediate affinity forms also associate with a gamma subunit.

The protein localises to the membrane. Functionally, receptor for interleukin-2. The receptor is involved in the regulation of immune tolerance by controlling regulatory T cells (TREGs) activity. TREGs suppress the activation and expansion of autoreactive T-cells. This chain is Interleukin-2 receptor subunit alpha (IL2RA), found in Macaca mulatta (Rhesus macaque).